The primary structure comprises 422 residues: Dihydrolipoyllysine-residue succinyltransferase component of 2-oxoglutarate dehydrogenase complex (422 aa).

The 76-residue stretch at 1 to 76 (MPEVKVPELA…EVGQAIAIIG (76 aa)) folds into the Lipoyl-binding domain. The residue at position 42 (Lys-42) is an N6-lipoyllysine. Positions 77–184 (EGSGNASKEN…APAKEEKKYN (108 aa)) are disordered. Polar residues-rich tracts occupy residues 80 to 94 (GNAS…TPQQ) and 116 to 130 (NQAN…NATP). A Peripheral subunit-binding (PSBD) domain is found at 127–163 (NATPSARRYARENGVNLAEVSPKTNDVVRKEDIDKKQ). The span at 152–163 (DVVRKEDIDKKQ) shows a compositional bias: basic and acidic residues. The span at 164–176 (QAPASTQTTQQAP) shows a compositional bias: low complexity. Active-site residues include His-393 and Asp-397.

The protein belongs to the 2-oxoacid dehydrogenase family. Forms a 24-polypeptide structural core with octahedral symmetry. Part of the 2-oxoglutarate dehydrogenase (OGDH) complex composed of E1 (2-oxoglutarate dehydrogenase), E2 (dihydrolipoamide succinyltransferase) and E3 (dihydrolipoamide dehydrogenase); the complex contains multiple copies of the three enzymatic components (E1, E2 and E3). (R)-lipoate serves as cofactor.

It catalyses the reaction N(6)-[(R)-dihydrolipoyl]-L-lysyl-[protein] + succinyl-CoA = N(6)-[(R)-S(8)-succinyldihydrolipoyl]-L-lysyl-[protein] + CoA. It participates in amino-acid degradation; L-lysine degradation via saccharopine pathway; glutaryl-CoA from L-lysine: step 6/6. Its function is as follows. E2 component of the 2-oxoglutarate dehydrogenase (OGDH) complex which catalyzes the second step in the conversion of 2-oxoglutarate to succinyl-CoA and CO(2). The chain is Dihydrolipoyllysine-residue succinyltransferase component of 2-oxoglutarate dehydrogenase complex (odhB) from Staphylococcus aureus (strain Mu50 / ATCC 700699).